A 307-amino-acid polypeptide reads, in one-letter code: Transcription initiation factor IIB 2 (307 aa).

The segment at 7 to 38 (TPKRCPECNSEHLIRDYEHGELICADCGAVIE) adopts a TFIIB-type zinc-finger fold. Zn(2+)-binding residues include Cys11, Cys14, Cys30, and Cys33. 2 consecutive repeat copies span residues 124 to 207 (QLLN…AKEL) and 218 to 299 (SYIS…EISK).

It belongs to the TFIIB family.

In terms of biological role, stabilizes TBP binding to an archaeal box-A promoter. Also responsible for recruiting RNA polymerase II to the pre-initiation complex (DNA-TBP-TFIIB). The protein is Transcription initiation factor IIB 2 of Thermoplasma acidophilum (strain ATCC 25905 / DSM 1728 / JCM 9062 / NBRC 15155 / AMRC-C165).